The chain runs to 273 residues: HTH-type transcriptional regulator NimR (273 aa).

In terms of domain architecture, HTH araC/xylS-type spans 158–258; the sequence is PKIRTMVEMM…GQTPGRYIAR (101 aa). DNA-binding regions (H-T-H motif) lie at residues 178–199 and 225–248; these read GQWAGFFAMSERNLARLIVKET and VQKVAHTLGYDSTTAFITMFKKGL.

Functionally, negatively regulates expression of the nimT operon and its own expression. Acts by binding to the nimR-nimT intergenic region. The polypeptide is HTH-type transcriptional regulator NimR (Escherichia coli (strain K12)).